The primary structure comprises 305 residues: Sulfate adenylyltransferase subunit 2 (305 aa).

This sequence belongs to the PAPS reductase family. CysD subfamily. As to quaternary structure, heterodimer composed of CysD, the smaller subunit, and CysN.

The catalysed reaction is sulfate + ATP + H(+) = adenosine 5'-phosphosulfate + diphosphate. The protein operates within sulfur metabolism; hydrogen sulfide biosynthesis; sulfite from sulfate: step 1/3. In terms of biological role, with CysN forms the ATP sulfurylase (ATPS) that catalyzes the adenylation of sulfate producing adenosine 5'-phosphosulfate (APS) and diphosphate, the first enzymatic step in sulfur assimilation pathway. APS synthesis involves the formation of a high-energy phosphoric-sulfuric acid anhydride bond driven by GTP hydrolysis by CysN coupled to ATP hydrolysis by CysD. The polypeptide is Sulfate adenylyltransferase subunit 2 (Stutzerimonas stutzeri (strain A1501) (Pseudomonas stutzeri)).